The primary structure comprises 302 residues: Tegument protein VP22 (302 aa).

Basic and acidic residues predominate over residues 1–10 (MASSDGDRLC). 2 disordered regions span residues 1–42 (MASS…PDDS) and 125–167 (SFTK…TATS). An interaction with gE region spans residues 154 to 244 (RPISFSTAPK…ANEADLGEGA (91 aa)). Positions 157–167 (SFSTAPKTATS) are enriched in polar residues. Residues 212-224 (LDRLLTGAVIRIT) carry the Nuclear export signal motif. The segment at 243 to 302 (GASVSKRGHNRKTGDLQGGMGNEPMYAQVRKPKSRTDTQTTGRITNRSRARSASRTDARK) is disordered.

It belongs to the alphaherpesvirinae VP22 tegument protein family. As to quaternary structure, interacts with gE (via C-terminus); this interaction is necessary for the recruitment of VP22/ORF9 to the Golgi and its packaging into virions. Interacts with gM (via C-terminus). Interacts with VP16/ORF10; this interaction allows the formation of a tripartite complex composed of VP16/ORF10, VP22/ORF9 and VHS/ORF17. Interacts with the capsid-binding protein ORF44. Interacts with host CGAS. Post-translationally, highly phosphorylated in the host cell. Packaging is selective for underphosphorylated forms.

The protein localises to the virion tegument. It localises to the host cytoplasm. The protein resides in the host nucleus. Its subcellular location is the host Golgi apparatus. Tegument protein that plays different roles during the time course of infection. Participates in both the accumulation of viral mRNAs and viral protein translation at late time of infection. Modulates the RNase activity of the virion host shutoff protein ORF17 probably to ensure necessary levels of key cellular mRNAs and proteins. Plays a role in microtubule reorganization that occurs after viral infection by stabilizing microtubule network. Plays a role in the inhibition of host innate immune system by targeting the CGAS enzymatic activity which is the principal cytosolic DNA sensor that detects invading viral DNA. Acts by mediating disruption of liquid-like droplets in which CGAS is activated, thereby preventing CGAS activity. The chain is Tegument protein VP22 from Varicella-zoster virus (strain Oka vaccine) (HHV-3).